A 36-amino-acid polypeptide reads, in one-letter code: Conotoxin Cal6.1h (36 aa).

Residues 1–7 (GLGRPSR) constitute a propeptide that is removed on maturation. 3 disulfides stabilise this stretch: Cys-9–Cys-25, Cys-16–Cys-29, and Cys-24–Cys-34.

It belongs to the conotoxin O1 superfamily. In terms of tissue distribution, expressed by the venom duct.

The protein resides in the secreted. Functionally, probable neurotoxin with unknown target. Possibly targets ion channels. The chain is Conotoxin Cal6.1h from Californiconus californicus (California cone).